The primary structure comprises 53 residues: Large ribosomal subunit protein eL40 (53 aa).

The protein belongs to the eukaryotic ribosomal protein eL40 family.

The sequence is that of Large ribosomal subunit protein eL40 from Pyrobaculum neutrophilum (strain DSM 2338 / JCM 9278 / NBRC 100436 / V24Sta) (Thermoproteus neutrophilus).